The sequence spans 78 residues: Large ribosomal subunit protein bL28 (78 aa).

The tract at residues 1-20 (MSRVCQVTGKRPVTGNNRSH) is disordered.

It belongs to the bacterial ribosomal protein bL28 family.

The protein is Large ribosomal subunit protein bL28 of Photobacterium profundum (strain SS9).